Reading from the N-terminus, the 121-residue chain is Small ribosomal subunit protein uS13 (121 aa).

Residues 92–121 (RRGLPVRGQKTKNNSRTRKGPRKTMANKKK) form a disordered region.

Belongs to the universal ribosomal protein uS13 family. Part of the 30S ribosomal subunit. Forms a loose heterodimer with protein S19. Forms two bridges to the 50S subunit in the 70S ribosome.

Functionally, located at the top of the head of the 30S subunit, it contacts several helices of the 16S rRNA. In the 70S ribosome it contacts the 23S rRNA (bridge B1a) and protein L5 of the 50S subunit (bridge B1b), connecting the 2 subunits; these bridges are implicated in subunit movement. Contacts the tRNAs in the A and P-sites. The polypeptide is Small ribosomal subunit protein uS13 (Oceanobacillus iheyensis (strain DSM 14371 / CIP 107618 / JCM 11309 / KCTC 3954 / HTE831)).